Here is a 406-residue protein sequence, read N- to C-terminus: Tyrosine--tRNA ligase (406 aa).

Y35 provides a ligand contact to L-tyrosine. The 'HIGH' region signature appears at 40–49; sequence ATSASLHIGH. The L-tyrosine site is built by Y167 and Q171. The 'KMSKS' region motif lies at 227-231; it reads KMGKS. K230 provides a ligand contact to ATP. The 65-residue stretch at 341–405 folds into the S4 RNA-binding domain; it reads ILLVDLMVLA…IGKKKILRIV (65 aa).

It belongs to the class-I aminoacyl-tRNA synthetase family. TyrS type 1 subfamily. As to quaternary structure, homodimer.

It localises to the cytoplasm. The catalysed reaction is tRNA(Tyr) + L-tyrosine + ATP = L-tyrosyl-tRNA(Tyr) + AMP + diphosphate + H(+). Its function is as follows. Catalyzes the attachment of tyrosine to tRNA(Tyr) in a two-step reaction: tyrosine is first activated by ATP to form Tyr-AMP and then transferred to the acceptor end of tRNA(Tyr). The polypeptide is Tyrosine--tRNA ligase (Borrelia recurrentis (strain A1)).